The chain runs to 1303 residues: Endoplasmic reticulum transmembrane helix translocase spfA (1303 aa).

A run of 2 helical transmembrane segments spans residues 25–45 (LHAYVWPFLIIWPAFFAVYLS) and 57–77 (EWTFVWSGSIITAQSLLWLMT). The tract at residues 158–191 (KPPVKVFQQAQGLTSKEEIDRIQHHYGDNTFDIP) is A-domain; part 1. Transmembrane regions (helical) follow at residues 201–221 (EHAVAPFFVFQVFCVGLWMLD) and 223–243 (YWYYSLFTLFMLVVFESTVVW). Residues 256–408 (NIKPYDVWVY…LVRTMIYSTE (153 aa)) form an A-domain; part 2 region. Residue N287 is glycosylated (N-linked (GlcNAc...) asparagine). The helical transmembrane segment at 415–435 (VEALLFILFLLIFAIAAAWYV) threads the bilayer. N-linked (GlcNAc...) asparagine glycosylation occurs at N474. The interval 484 to 513 (AIFCTEPFRIPFAGRVDVACFDKTGTLTGE) is P-domain; part 1. D505 functions as the 4-aspartylphosphate intermediate in the catalytic mechanism. Mg(2+) is bound by residues D505 and T507. 505–507 (DKT) lines the ATP pocket. The segment at 515–721 (LVVDGIAGLT…FAGFLVLQCP (207 aa)) is N-domain. An N-linked (GlcNAc...) asparagine glycan is attached at N589. ATP-binding residues include F616 and R678. Residues 724–883 (EDAIKAVRML…HVGVALLNGS (160 aa)) form a P-domain; part 2 region. A glycan (N-linked (GlcNAc...) asparagine) is linked at N734. ATP-binding positions include D746 and 862-866 (DGTND). D862 lines the Mg(2+) pocket. The tract at residues 884–1019 (PEDLAKIAEH…ELDDSEPPTI (136 aa)) is arm-like. N-linked (GlcNAc...) asparagine glycosylation occurs at N958. The tract at residues 1020 to 1035 (KLGDASVAAPFTSKLA) is P-domain; part 3. A run of 5 helical transmembrane segments spans residues 1060-1080 (ILALNCLISAYSLSVIYLDGI), 1082-1102 (FGDGQVTISGMLMSVCFLSIS), 1122-1142 (VYIIGSVLGQFAIHIATLIYL), 1201-1221 (AMYWGLVAASGVAFSCATEFI), and 1239-1259 (VTLTVLMIIDYAGCWIIENVL). The tract at residues 1277–1303 (DQLQREMERKKQEELETQAEKERQRKV) is disordered.

The protein belongs to the cation transport ATPase (P-type) (TC 3.A.3) family. Type V subfamily. Mg(2+) serves as cofactor.

It localises to the endoplasmic reticulum membrane. The catalysed reaction is [protein]-with a C-terminal TM segment(out) + ATP + H2O = [protein]-with a C-terminal TM segment(in) + ADP + phosphate + H(+). The ATPase activity is stimulated by phosphatidylinositol 4-phosphate (PI4P). Functionally, endoplasmic reticulum (ER) translocase required to remove mitochondrial transmembrane proteins mistargeted to the endoplasmic reticulum. Acts as a dislocase that mediates the ATP-dependent extraction of mislocalized mitochondrial transmembrane proteins from the endoplasmic reticulum membrane. Works in concert with the ER Ca(2+) pump srcA to support ER homeostasis. With srcA, also supports redox homeostasis and virulence. The protein is Endoplasmic reticulum transmembrane helix translocase spfA of Aspergillus fumigatus (strain ATCC MYA-4609 / CBS 101355 / FGSC A1100 / Af293) (Neosartorya fumigata).